The following is a 65-amino-acid chain: Small ribosomal subunit protein bS21 (65 aa).

Residues 45-65 (GRLKRSRSRRRAQRANEERNS) form a disordered region. Residues 48–57 (KRSRSRRRAQ) are compositionally biased toward basic residues.

Belongs to the bacterial ribosomal protein bS21 family.

This is Small ribosomal subunit protein bS21 from Pelodictyon phaeoclathratiforme (strain DSM 5477 / BU-1).